Here is a 508-residue protein sequence, read N- to C-terminus: Lysine--tRNA ligase (508 aa).

Residues Glu-416 and Glu-423 each coordinate Mg(2+).

The protein belongs to the class-II aminoacyl-tRNA synthetase family. Homodimer. It depends on Mg(2+) as a cofactor.

The protein resides in the cytoplasm. The catalysed reaction is tRNA(Lys) + L-lysine + ATP = L-lysyl-tRNA(Lys) + AMP + diphosphate. This chain is Lysine--tRNA ligase, found in Prochlorococcus marinus (strain MIT 9313).